The following is a 319-amino-acid chain: Cytochrome c biogenesis protein CcsA (319 aa).

The next 8 helical transmembrane spans lie at 14 to 34 (AFGGLLIAMLVYWISLAFPGI), 36 to 56 (GLNRLATLITLLVNIALTLTL), 69 to 89 (SNLYESLLFLAWGLTFVHLFI), 97 to 117 (LIGATAIPVAMFVTAFASLAL), 142 to 162 (IMMLSYAILILGSLLSILFLI), 227 to 247 (TIGLGFPLLTIGIIAGAVWAN), 254 to 274 (WSWDPKETWALITWLIFAAYL), and 288 to 308 (AILASLGFLVVWICYLGVNFL).

This sequence belongs to the CcmF/CycK/Ccl1/NrfE/CcsA family. In terms of assembly, may interact with Ccs1.

The protein localises to the plastid. The protein resides in the chloroplast thylakoid membrane. In terms of biological role, required during biogenesis of c-type cytochromes (cytochrome c6 and cytochrome f) at the step of heme attachment. The sequence is that of Cytochrome c biogenesis protein CcsA from Pyropia yezoensis (Susabi-nori).